A 319-amino-acid chain; its full sequence is Ribose-phosphate pyrophosphokinase (319 aa).

ATP-binding positions include 40–42 (DGE) and 99–100 (RQ). 2 residues coordinate Mg(2+): histidine 134 and aspartate 174. The active site involves lysine 198. D-ribose 5-phosphate-binding positions include arginine 200, aspartate 224, and 228–232 (DTAGT).

Belongs to the ribose-phosphate pyrophosphokinase family. Class I subfamily. Homohexamer. Mg(2+) serves as cofactor.

It is found in the cytoplasm. It catalyses the reaction D-ribose 5-phosphate + ATP = 5-phospho-alpha-D-ribose 1-diphosphate + AMP + H(+). It participates in metabolic intermediate biosynthesis; 5-phospho-alpha-D-ribose 1-diphosphate biosynthesis; 5-phospho-alpha-D-ribose 1-diphosphate from D-ribose 5-phosphate (route I): step 1/1. Functionally, involved in the biosynthesis of the central metabolite phospho-alpha-D-ribosyl-1-pyrophosphate (PRPP) via the transfer of pyrophosphoryl group from ATP to 1-hydroxyl of ribose-5-phosphate (Rib-5-P). In Coxiella burnetii (strain RSA 493 / Nine Mile phase I), this protein is Ribose-phosphate pyrophosphokinase.